The chain runs to 464 residues: Zinc transporter 6 (464 aa).

Residues 1 to 33 (MGTIYLFRKTQRSLLGKLTQEFRLVTADRRSWK) are Cytoplasmic-facing. Residues 34–54 (ILLFGAINVVCTGFLLTWCSS) traverse the membrane as a helical segment. Residues 55–64 (TNSMALTAYT) lie on the Extracellular side of the membrane. The chain crosses the membrane as a helical span at residues 65–85 (YLTIFDLFSLITCLISYWVMM). Over 86-98 (KKPSPTYSFGFER) the chain is Cytoplasmic. A helical membrane pass occupies residues 99–119 (FEVLSVFASTVLAQLGALFIL). The Extracellular portion of the chain corresponds to 120-134 (KESAERFVEQPEIHT). Residues 135 to 155 (GRLLVGTFVALCFNLFSMLSI) form a helical membrane-spanning segment. At 156 to 200 (RNKPFAYVSEAASTSWLQEHVADLSRSLCGIIPGLSSIFLPRMNP) the chain is on the cytoplasmic side. The chain crosses the membrane as a helical span at residues 201 to 221 (FVLIDIAGALALCITYMLIEI). Residues 222 to 228 (NNYFAVD) lie on the Extracellular side of the membrane. Residues 229 to 249 (TASAIAIAVMTFGTMYPMSVY) traverse the membrane as a helical segment. Over 250–464 (SGKVLLQTTP…TPGQFTQFKQ (215 aa)) the chain is Cytoplasmic.

It belongs to the cation diffusion facilitator (CDF) transporter (TC 2.A.4) family. SLC30A subfamily. In terms of assembly, heterodimer with SLC30A5; form a functional zinc ion transmembrane transporter.

It is found in the golgi apparatus. The protein resides in the trans-Golgi network membrane. In terms of biological role, has probably no intrinsic transporter activity but together with SLC30A5 forms a functional zinc ion:proton antiporter heterodimer, mediating zinc entry into the lumen of organelles along the secretory pathway. As part of that zinc ion:proton antiporter, contributes to zinc ion homeostasis within the early secretory pathway and regulates the activation and folding of enzymes like alkaline phosphatases and enzymes involved in phosphatidylinositol glycan anchor biosynthesis. This is Zinc transporter 6 (slc30a6) from Xenopus tropicalis (Western clawed frog).